A 412-amino-acid polypeptide reads, in one-letter code: Interferon-inducible GTPase 5 (412 aa).

One can recognise an IRG-type G domain in the interval T51–D234. GTP contacts are provided by residues E60–S67, T85–E89, and S215–L217. Phosphoserine occurs at positions 246 and 303.

It belongs to the TRAFAC class dynamin-like GTPase superfamily. IRG family. In terms of assembly, interacts with PLIN2/ADRP and COX4I1/COXIV. Expressed in spermatozoa tails from the testis and epididymis, where it may be a component of the fibrous sheath (at protein level).

It localises to the cell projection. The protein resides in the cilium. The protein localises to the flagellum. It is found in the lipid droplet. It catalyses the reaction GTP + H2O = GDP + phosphate + H(+). Required for sperm motility and therefore male fertility, via positive regulation of spermatozoa fibrous sheath formation. The sequence is that of Interferon-inducible GTPase 5 from Mus musculus (Mouse).